We begin with the raw amino-acid sequence, 602 residues long: Potassium-transporting ATPase potassium-binding subunit (602 aa).

10 consecutive transmembrane segments (helical) span residues 3 to 23 (ANNLLQAAIFIVVLIAAAVPV), 64 to 84 (QYALATVAFNALGVLFLYALL), 135 to 155 (GLTVQNFLSAATGIVVVLALI), 178 to 198 (LYVLVPMAAIIAALLMSQGVI), 282 to 302 (FSNFLEIFAILIIPAALCLVF), 313 to 333 (VAVLAAMTVALAAAIGIETSA), 418 to 438 (GLYGMLVFALLAVFVAGLMIG), 456 to 476 (VSIVVLLTPLLVLVGTSIAVL), 522 to 542 (WMTAIAMWFGRFGTIVPVLAI), and 565 to 585 (LFVVLLLGTVLLVGALTYMPA).

Belongs to the KdpA family. In terms of assembly, the system is composed of three essential subunits: KdpA, KdpB and KdpC.

The protein localises to the cell inner membrane. Its function is as follows. Part of the high-affinity ATP-driven potassium transport (or Kdp) system, which catalyzes the hydrolysis of ATP coupled with the electrogenic transport of potassium into the cytoplasm. This subunit binds the periplasmic potassium ions and delivers the ions to the membrane domain of KdpB through an intramembrane tunnel. In Burkholderia pseudomallei (strain K96243), this protein is Potassium-transporting ATPase potassium-binding subunit.